Reading from the N-terminus, the 384-residue chain is Histone acetyltransferase type B subunit 2 (384 aa).

5 WD repeats span residues 156 to 196 (GHSA…SSIS), 203 to 243 (RHET…CIHA), 247 to 287 (AHTS…QPLH), 291 to 331 (GHSK…AEVP), and 348 to 384 (GHTS…PQPE).

This sequence belongs to the WD repeat RBAP46/RBAP48/MSI1 family. Component of the HAT-B complex.

It is found in the cytoplasm. The protein localises to the nucleus. Functionally, regulatory subunit of the histone acetylase B (HAT-B) complex. The complex acetylates histone H4 which is required for telomeric silencing. The protein is Histone acetyltransferase type B subunit 2 (HAT2) of Encephalitozoon cuniculi (strain GB-M1) (Microsporidian parasite).